A 486-amino-acid chain; its full sequence is Ribulose bisphosphate carboxylase large chain (486 aa).

Residues 1-2 (MS) constitute a propeptide that is removed on maturation. Substrate contacts are provided by N123 and T173. The Proton acceptor role is filled by K175. K177 lines the substrate pocket. 3 residues coordinate Mg(2+): K201, D203, and E204. Residue K201 is modified to N6-carboxylysine. S208 is modified (phosphoserine). H294 (proton acceptor) is an active-site residue. Positions 295 and 327 each coordinate substrate. Position 330 is a phosphothreonine (T330). S379 serves as a coordination point for substrate.

Belongs to the RuBisCO large chain family. Type I subfamily. Heterohexadecamer of 8 large chains and 8 small chains; disulfide-linked. The disulfide link is formed within the large subunit homodimers. Requires Mg(2+) as cofactor. Post-translationally, the disulfide bond which can form in the large chain dimeric partners within the hexadecamer appears to be associated with oxidative stress and protein turnover.

The protein resides in the plastid. It is found in the chloroplast. The catalysed reaction is 2 (2R)-3-phosphoglycerate + 2 H(+) = D-ribulose 1,5-bisphosphate + CO2 + H2O. It carries out the reaction D-ribulose 1,5-bisphosphate + O2 = 2-phosphoglycolate + (2R)-3-phosphoglycerate + 2 H(+). In terms of biological role, ruBisCO catalyzes two reactions: the carboxylation of D-ribulose 1,5-bisphosphate, the primary event in carbon dioxide fixation, as well as the oxidative fragmentation of the pentose substrate in the photorespiration process. Both reactions occur simultaneously and in competition at the same active site. This is Ribulose bisphosphate carboxylase large chain from Aethionema grandiflorum (Persian stone-cress).